We begin with the raw amino-acid sequence, 557 residues long: Glypican-1 (557 aa).

The N-terminal stretch at 1 to 23 (MELRTRGWWLLCAAAALVVCARG) is a signal peptide. Disulfide bonds link C32–C68, C62–C255, C69–C258, C190–C342, C245–C278, C267–C414, and C271–C400. N-linked (GlcNAc...) asparagine glycosylation is found at N79 and N116. Residues 477–531 (FQDASDDGSGSGSGGGCPDDTCGRRVSKKSSSSRTPLTHALPGLSEQEGQKTSAA) form a disordered region. Residues S485, S487, and S489 are each glycosylated (O-linked (Xyl...) (heparan sulfate) serine). Residue S529 is the site of GPI-anchor amidated serine attachment. A propeptide spans 530-557 (AATCPEPHSFFLLFLVTLVLAAARPRWR) (removed in mature form).

Belongs to the glypican family. In terms of processing, S-nitrosylated in a Cu(2+)-dependent manner. Nitric acid (NO) is released from the nitrosylated cysteines by ascorbate or by some other reducing agent, in a Cu(2+) or Zn(2+) dependent manner. This free nitric oxide is then capable of cleaving the heparan sulfate side chains. N- and O-glycosylated. N-glycosylation is mainly of the complex type containing sialic acid. O-glycosylated with heparan sulfate. The heparan sulfate chains can be cleaved either by the action of heparanase or, degraded by a deaminative process that uses nitric oxide (NO) released from the S-nitrosylated cysteines. This process is triggered by ascorbate, or by some other reducing agent, in a Cu(2+)- or Zn(2+) dependent manner. Cu(2+) ions are provided by ceruloproteins such as APP, PRNP or CP which associate with GCP1 in intracellular compartments or lipid rafts. Post-translationally, this cell-associated glypican is further processed to give rise to a medium-released species.

It is found in the cell membrane. Its subcellular location is the endosome. The protein localises to the secreted. The protein resides in the extracellular space. Functionally, cell surface proteoglycan that bears heparan sulfate. Binds, via the heparan sulfate side chains, alpha-4 (V) collagen and participates in Schwann cell myelination. May act as a catalyst in increasing the rate of conversion of prion protein PRPN(C) to PRNP(Sc) via associating (via the heparan sulfate side chains) with both forms of PRPN, targeting them to lipid rafts and facilitating their interaction. Required for proper skeletal muscle differentiation by sequestering FGF2 in lipid rafts preventing its binding to receptors (FGFRs) and inhibiting the FGF-mediated signaling. Binds Cu(2+) or Zn(2+) ions. The protein is Glypican-1 (Gpc1) of Mus musculus (Mouse).